Here is a 151-residue protein sequence, read N- to C-terminus: uncharacterized protein (151 aa).

BON domains follow at residues 2–68 (DDAA…AVDK) and 78–146 (IDSA…RLKH).

This is an uncharacterized protein from Anaplasma centrale.